The sequence spans 724 residues: MTRDVTLSLAQEFGLDAAEYQRVLDIMGRTPSFTELGIFSVMWSEHCSYKSSRHWLKQLPTKAPWVIHGPGENAGVVDIGDGLAAIFKMESHNHPSFIEPYQGAATGVGGILRDVFTMGARPVANLNALRFGSPDHPATKRIIDGVVRGIGGYGNCVGVPTVGGEVNFHPSYNGNPLVNAMTVGIAPKDRIFLSAAAGVGNPVIYVGSKTGRDGIHGATMASTEFGADSEEKRPTVQVGDPFTEKLLIEACLELMATDAIIAIQDMGAAGLTSSSVEMAGKGGVGIELDLDAVPQREEGMNAYEMMLSESQERMLMILRPDRQDVARAIFEKWELDFAVIGHLTDTGHIVVKHQGVVEADIPLDPLAEQAPLYQRPTVETPKRAPLGEVADPVGIASALLTLIGSPDIASRRWIWDQYDSTVGGQTVRRPGAADAAVVRLDGTERALALTTDCTPRYCFADPEVGGAQAVAETWRNLTAVGAHPLAITDNMNFGNPQKPEIMGQFAAAIRGMREACLTLDFPVVSGNVSLYNETEGTGILPTPAIGGLGVLDNAETATGLSLRPGLDLVLIGTGGTTLGQSLWLREIAGREDGPPPAVDLAAERRHGDLVRSLIHQGKVAACHDLSDGGLLVAIAEMAIAGHTGAVLSGEGDHVFWYGEDQARYIIATTYSAAVLDAAKAANVPASLIGRAEGTDLQVPGCTPISVATLRERHEAFLPALMAQR.

The active site involves His-46. Positions 49 and 88 each coordinate ATP. Glu-90 serves as a coordination point for Mg(2+). Substrate-binding positions include 91-94 and Arg-113; that span reads SHNH. His-92 functions as the Proton acceptor in the catalytic mechanism. Asp-114 lines the Mg(2+) pocket. Gln-237 contributes to the substrate binding site. Asp-265 is a Mg(2+) binding site. 309–311 contacts substrate; that stretch reads ESQ. Residues Asp-489 and Gly-526 each coordinate ATP. Position 527 (Asn-527) interacts with Mg(2+). Position 529 (Ser-529) interacts with substrate.

The protein belongs to the FGAMS family. Monomer. Part of the FGAM synthase complex composed of 1 PurL, 1 PurQ and 2 PurS subunits.

It is found in the cytoplasm. It carries out the reaction N(2)-formyl-N(1)-(5-phospho-beta-D-ribosyl)glycinamide + L-glutamine + ATP + H2O = 2-formamido-N(1)-(5-O-phospho-beta-D-ribosyl)acetamidine + L-glutamate + ADP + phosphate + H(+). The protein operates within purine metabolism; IMP biosynthesis via de novo pathway; 5-amino-1-(5-phospho-D-ribosyl)imidazole from N(2)-formyl-N(1)-(5-phospho-D-ribosyl)glycinamide: step 1/2. Functionally, part of the phosphoribosylformylglycinamidine synthase complex involved in the purines biosynthetic pathway. Catalyzes the ATP-dependent conversion of formylglycinamide ribonucleotide (FGAR) and glutamine to yield formylglycinamidine ribonucleotide (FGAM) and glutamate. The FGAM synthase complex is composed of three subunits. PurQ produces an ammonia molecule by converting glutamine to glutamate. PurL transfers the ammonia molecule to FGAR to form FGAM in an ATP-dependent manner. PurS interacts with PurQ and PurL and is thought to assist in the transfer of the ammonia molecule from PurQ to PurL. In Granulibacter bethesdensis (strain ATCC BAA-1260 / CGDNIH1), this protein is Phosphoribosylformylglycinamidine synthase subunit PurL.